Reading from the N-terminus, the 82-residue chain is Cytochrome b559 subunit alpha (82 aa).

The chain crosses the membrane as a helical span at residues 21-35 (VIHSITVPALFIAGW). Residue His-23 participates in heme binding.

This sequence belongs to the PsbE/PsbF family. In terms of assembly, heterodimer of an alpha subunit and a beta subunit. PSII is composed of 1 copy each of membrane proteins PsbA, PsbB, PsbC, PsbD, PsbE, PsbF, PsbH, PsbI, PsbJ, PsbK, PsbL, PsbM, PsbT, PsbX, PsbY, PsbZ, Psb30/Ycf12, at least 3 peripheral proteins of the oxygen-evolving complex and a large number of cofactors. It forms dimeric complexes. Heme b is required as a cofactor.

It localises to the plastid. The protein resides in the chloroplast thylakoid membrane. Its function is as follows. This b-type cytochrome is tightly associated with the reaction center of photosystem II (PSII). PSII is a light-driven water:plastoquinone oxidoreductase that uses light energy to abstract electrons from H(2)O, generating O(2) and a proton gradient subsequently used for ATP formation. It consists of a core antenna complex that captures photons, and an electron transfer chain that converts photonic excitation into a charge separation. This chain is Cytochrome b559 subunit alpha, found in Chlamydomonas reinhardtii (Chlamydomonas smithii).